The following is a 628-amino-acid chain: Glutamine--fructose-6-phosphate aminotransferase [isomerizing] (628 aa).

Cys2 acts as the Nucleophile; for GATase activity in catalysis. The Glutamine amidotransferase type-2 domain occupies 2 to 229 (CGIVGYVGHR…QDQAVVLTAD (228 aa)). The interval 61 to 94 (ETDSNDGDGLGGSTGLGHTRWATHGRPTDRNAHP) is disordered. 2 SIS domains span residues 301–440 (SDQE…ARGT) and 473–618 (LAER…VDKP). The active-site For Fru-6P isomerization activity is the Lys623.

Homodimer.

It localises to the cytoplasm. It carries out the reaction D-fructose 6-phosphate + L-glutamine = D-glucosamine 6-phosphate + L-glutamate. Functionally, catalyzes the first step in hexosamine metabolism, converting fructose-6P into glucosamine-6P using glutamine as a nitrogen source. In Mycolicibacterium smegmatis (strain ATCC 700084 / mc(2)155) (Mycobacterium smegmatis), this protein is Glutamine--fructose-6-phosphate aminotransferase [isomerizing].